A 362-amino-acid polypeptide reads, in one-letter code: Heme A synthase (362 aa).

Helical transmembrane passes span 11–31 (AAIRIWLSIVAGLIALMVLVG), 102–122 (VIGMVYLLPFLWFLWRGAVSG), 128–148 (LWLIFGLGALQGAVGWWMVAS), 159–179 (VRLATHLSLALLIFASIVWTL), and 198–218 (AWALVGVTFVQLYLGALVAGL). H262 contributes to the heme binding site. 3 consecutive transmembrane segments (helical) span residues 264–286 (MTAYTLLALAAWHAFDVMRAGAG), 297–317 (LAAILVQAVLGIATLLMVVPI), and 318–338 (SLALLHQGTALIVLTFAVLQA). Residue H323 coordinates heme.

The protein belongs to the COX15/CtaA family. Type 2 subfamily. Interacts with CtaB. Heme b is required as a cofactor.

It localises to the cell membrane. It carries out the reaction Fe(II)-heme o + 2 A + H2O = Fe(II)-heme a + 2 AH2. It participates in porphyrin-containing compound metabolism; heme A biosynthesis; heme A from heme O: step 1/1. Functionally, catalyzes the conversion of heme O to heme A by two successive hydroxylations of the methyl group at C8. The first hydroxylation forms heme I, the second hydroxylation results in an unstable dihydroxymethyl group, which spontaneously dehydrates, resulting in the formyl group of heme A. This chain is Heme A synthase, found in Bradyrhizobium sp. (strain ORS 278).